The primary structure comprises 112 residues: MMKVLVVVALLVTLISYSSSEGIDDLEADELLSLMANEQTRAKACTPRFYDCSHDRHSCCRSELFKDVCTCFYPEGGDNEVCTCQQPKHLKYMEKAAGKAKKFGGKIKKWFG.

The N-terminal stretch at 1-20 is a signal peptide; sequence MMKVLVVVALLVTLISYSSS. A propeptide spanning residues 21–41 is cleaved from the precursor; sequence EGIDDLEADELLSLMANEQTR. Cystine bridges form between cysteine 45-cysteine 60, cysteine 52-cysteine 69, cysteine 59-cysteine 84, and cysteine 71-cysteine 82.

It belongs to the neurotoxin 19 (CSTX) family. 01 subfamily. As to expression, expressed by the venom gland.

Its subcellular location is the secreted. The polypeptide is Toxin-like structure LSTX-D10 (Lycosa singoriensis (Wolf spider)).